Here is a 380-residue protein sequence, read N- to C-terminus: Queuine tRNA-ribosyltransferase (380 aa).

Aspartate 96 serves as the catalytic Proton acceptor. Residues 96 to 100, aspartate 150, glutamine 193, and glycine 220 each bind substrate; that span reads DSGGF. Residues 251-257 are RNA binding; sequence GVGAPDS. The active-site Nucleophile is aspartate 270. The tract at residues 275–279 is RNA binding; important for wobble base 34 recognition; it reads TRIAR. The Zn(2+) site is built by cysteine 308, cysteine 310, cysteine 313, and histidine 339.

It belongs to the queuine tRNA-ribosyltransferase family. In terms of assembly, homodimer. Within each dimer, one monomer is responsible for RNA recognition and catalysis, while the other monomer binds to the replacement base PreQ1. Zn(2+) serves as cofactor.

It carries out the reaction 7-aminomethyl-7-carbaguanine + guanosine(34) in tRNA = 7-aminomethyl-7-carbaguanosine(34) in tRNA + guanine. It participates in tRNA modification; tRNA-queuosine biosynthesis. Functionally, catalyzes the base-exchange of a guanine (G) residue with the queuine precursor 7-aminomethyl-7-deazaguanine (PreQ1) at position 34 (anticodon wobble position) in tRNAs with GU(N) anticodons (tRNA-Asp, -Asn, -His and -Tyr). Catalysis occurs through a double-displacement mechanism. The nucleophile active site attacks the C1' of nucleotide 34 to detach the guanine base from the RNA, forming a covalent enzyme-RNA intermediate. The proton acceptor active site deprotonates the incoming PreQ1, allowing a nucleophilic attack on the C1' of the ribose to form the product. After dissociation, two additional enzymatic reactions on the tRNA convert PreQ1 to queuine (Q), resulting in the hypermodified nucleoside queuosine (7-(((4,5-cis-dihydroxy-2-cyclopenten-1-yl)amino)methyl)-7-deazaguanosine). The sequence is that of Queuine tRNA-ribosyltransferase from Streptococcus equi subsp. zooepidemicus (strain H70).